The primary structure comprises 387 residues: Succinate--CoA ligase [ADP-forming] subunit beta (387 aa).

The region spanning Arg9–Lys236 is the ATP-grasp domain. ATP contacts are provided by residues Lys45, Gly52–Gly54, Ala94, and Glu99. Positions 191 and 205 each coordinate Mg(2+). Residues Asn256 and Gly318–Thr320 each bind substrate.

Belongs to the succinate/malate CoA ligase beta subunit family. Heterotetramer of two alpha and two beta subunits. The cofactor is Mg(2+).

It carries out the reaction succinate + ATP + CoA = succinyl-CoA + ADP + phosphate. The catalysed reaction is GTP + succinate + CoA = succinyl-CoA + GDP + phosphate. Its pathway is carbohydrate metabolism; tricarboxylic acid cycle; succinate from succinyl-CoA (ligase route): step 1/1. Functionally, succinyl-CoA synthetase functions in the citric acid cycle (TCA), coupling the hydrolysis of succinyl-CoA to the synthesis of either ATP or GTP and thus represents the only step of substrate-level phosphorylation in the TCA. The beta subunit provides nucleotide specificity of the enzyme and binds the substrate succinate, while the binding sites for coenzyme A and phosphate are found in the alpha subunit. This is Succinate--CoA ligase [ADP-forming] subunit beta from Leifsonia xyli subsp. xyli (strain CTCB07).